The sequence spans 346 residues: Selenide, water dikinase (346 aa).

Sec17 is a catalytic residue. Residue Sec17 is a non-standard amino acid, selenocysteine. Residues Lys20 and 47-49 (TSD) each bind ATP. Asp50 serves as a coordination point for Mg(2+). ATP is bound by residues Asp67, Asp90, and 138-140 (GHT). Residue Asp90 participates in Mg(2+) binding. Asp226 provides a ligand contact to Mg(2+).

It belongs to the selenophosphate synthase 1 family. Class I subfamily. As to quaternary structure, homodimer. Requires Mg(2+) as cofactor.

The enzyme catalyses hydrogenselenide + ATP + H2O = selenophosphate + AMP + phosphate + 2 H(+). In terms of biological role, synthesizes selenophosphate from selenide and ATP. The polypeptide is Selenide, water dikinase (Trichlorobacter lovleyi (strain ATCC BAA-1151 / DSM 17278 / SZ) (Geobacter lovleyi)).